A 569-amino-acid chain; its full sequence is Protein THEMIS3 (569 aa).

2 CABIT regions span residues 1–254 (MEQT…ARLD) and 255–523 (RKPR…EERS).

This sequence belongs to the themis family. In terms of tissue distribution, specifically expressed in the intestine.

The polypeptide is Protein THEMIS3 (Themis3) (Mus musculus (Mouse)).